The chain runs to 424 residues: Gamma-glutamyl phosphate reductase (424 aa).

Belongs to the gamma-glutamyl phosphate reductase family.

The protein localises to the cytoplasm. It catalyses the reaction L-glutamate 5-semialdehyde + phosphate + NADP(+) = L-glutamyl 5-phosphate + NADPH + H(+). The protein operates within amino-acid biosynthesis; L-proline biosynthesis; L-glutamate 5-semialdehyde from L-glutamate: step 2/2. Functionally, catalyzes the NADPH-dependent reduction of L-glutamate 5-phosphate into L-glutamate 5-semialdehyde and phosphate. The product spontaneously undergoes cyclization to form 1-pyrroline-5-carboxylate. The polypeptide is Gamma-glutamyl phosphate reductase (Dehalococcoides mccartyi (strain ATCC BAA-2266 / KCTC 15142 / 195) (Dehalococcoides ethenogenes (strain 195))).